Here is a 547-residue protein sequence, read N- to C-terminus: Mercuric reductase (547 aa).

An HMA domain is found at 5–70; the sequence is APTELAITGM…AVVASGYGVH (66 aa). Residues Cys16 and Cys19 each contribute to the a metal cation site. 2 residues coordinate FAD: Ala96 and Thr121. Cys122 and Cys127 form a disulfide bridge. FAD is bound by residues Lys131, Ala197, Asp389, and Val397. Cys544 and Cys545 together coordinate Hg(2+).

It belongs to the class-I pyridine nucleotide-disulfide oxidoreductase family. As to quaternary structure, homodimer. FAD serves as cofactor.

It catalyses the reaction Hg + NADP(+) + H(+) = Hg(2+) + NADPH. Functionally, resistance to Hg(2+) in bacteria appears to be governed by a specialized system which includes mercuric reductase. MerA protein is responsible for volatilizing mercury as Hg(0). This chain is Mercuric reductase (merA), found in Acidithiobacillus ferrooxidans (Thiobacillus ferrooxidans).